Reading from the N-terminus, the 208-residue chain is MEDLDFPICILKMNLQCCEDFPSRVKKLLRQVKGVYAITIDPVKGLILVCGTAEPSVLIKAVAKLGQSPQLYAYEKDPATAKTRFRTLLKRYATNKTQDKPSPPAPPVTATTPVETCPAGGETFRGFGYPGPTTMMQMPAFSLPPPRGLPGWLAPPTNPRLKYEEPKVTPRKPPAPYPFDYYENLGFPPSDSLFNYFSDDNPQPCSIM.

Residues 6–70 (FPICILKMNL…AVAKLGQSPQ (65 aa)) enclose the HMA domain. The disordered stretch occupies residues 93 to 116 (ATNKTQDKPSPPAPPVTATTPVET). Cys205 carries the post-translational modification Cysteine methyl ester. A lipid anchor (S-farnesyl cysteine) is attached at Cys205. A propeptide spans 206 to 208 (SIM) (removed in mature form).

This sequence belongs to the HIPP family.

In terms of biological role, probable heavy-metal-binding protein. The polypeptide is Heavy metal-associated isoprenylated plant protein 42 (Arabidopsis thaliana (Mouse-ear cress)).